Consider the following 152-residue polypeptide: Small ribosomal subunit protein uS13 (152 aa).

The protein belongs to the universal ribosomal protein uS13 family. As to quaternary structure, component of the small ribosomal subunit.

It localises to the cytoplasm. Component of the small ribosomal subunit. The ribosome is a large ribonucleoprotein complex responsible for the synthesis of proteins in the cell. Plays an essential role in early embryonic development. The protein is Small ribosomal subunit protein uS13 (rps18) of Danio rerio (Zebrafish).